Here is a 146-residue protein sequence, read N- to C-terminus: Hemoglobin subunit delta (146 aa).

The Globin domain occupies H2–H146. Heme b is bound by residues H63 and H92.

This sequence belongs to the globin family. Heterotetramer of two delta chains and two alpha chains. In terms of tissue distribution, red blood cells.

The sequence is that of Hemoglobin subunit delta (HBD) from Ateles fusciceps (Brown-headed spider monkey).